A 229-amino-acid chain; its full sequence is Leucyl/phenylalanyl-tRNA--protein transferase (229 aa).

It belongs to the L/F-transferase family.

It is found in the cytoplasm. The catalysed reaction is N-terminal L-lysyl-[protein] + L-leucyl-tRNA(Leu) = N-terminal L-leucyl-L-lysyl-[protein] + tRNA(Leu) + H(+). It catalyses the reaction N-terminal L-arginyl-[protein] + L-leucyl-tRNA(Leu) = N-terminal L-leucyl-L-arginyl-[protein] + tRNA(Leu) + H(+). The enzyme catalyses L-phenylalanyl-tRNA(Phe) + an N-terminal L-alpha-aminoacyl-[protein] = an N-terminal L-phenylalanyl-L-alpha-aminoacyl-[protein] + tRNA(Phe). Functionally, functions in the N-end rule pathway of protein degradation where it conjugates Leu, Phe and, less efficiently, Met from aminoacyl-tRNAs to the N-termini of proteins containing an N-terminal arginine or lysine. This chain is Leucyl/phenylalanyl-tRNA--protein transferase, found in Desulforapulum autotrophicum (strain ATCC 43914 / DSM 3382 / VKM B-1955 / HRM2) (Desulfobacterium autotrophicum).